The following is a 527-amino-acid chain: Plant-specific TFIIB-related protein PTF2 (527 aa).

The segment at Met-1–Glu-30 adopts a TFIIB-type zinc-finger fold.

In terms of assembly, can form homodimer. Interacts with TBP2. Expressed in shoot apical meristems, root tips, primordia of lateral roots, inflorescences, developing pollen grains and embryos.

Its subcellular location is the nucleus. In terms of biological role, plant-specific TFIIB-related protein that plays important roles in pollen germination and embryogenesis, possibly by regulating gene expression through interaction with TBP2 and the subunits of RNA polymerases. Binds double-stranded DNA in vitro. The polypeptide is Plant-specific TFIIB-related protein PTF2 (Arabidopsis thaliana (Mouse-ear cress)).